The following is a 112-amino-acid chain: Large ribosomal subunit protein eL30 (112 aa).

It belongs to the eukaryotic ribosomal protein eL30 family.

This is Large ribosomal subunit protein eL30 (RPL30) from Zea mays (Maize).